A 249-amino-acid chain; its full sequence is Type III pantothenate kinase (249 aa).

6–13 (DCGNSFIK) contributes to the ATP binding site. Residues Tyr93 and 100–103 (GLDR) each bind substrate. Asp102 (proton acceptor) is an active-site residue. Asp122 provides a ligand contact to K(+). Residue Thr125 participates in ATP binding. Thr181 serves as a coordination point for substrate.

The protein belongs to the type III pantothenate kinase family. As to quaternary structure, homodimer. NH4(+) is required as a cofactor. Requires K(+) as cofactor.

The protein resides in the cytoplasm. The enzyme catalyses (R)-pantothenate + ATP = (R)-4'-phosphopantothenate + ADP + H(+). It functions in the pathway cofactor biosynthesis; coenzyme A biosynthesis; CoA from (R)-pantothenate: step 1/5. In terms of biological role, catalyzes the phosphorylation of pantothenate (Pan), the first step in CoA biosynthesis. The protein is Type III pantothenate kinase of Pseudomonas savastanoi pv. phaseolicola (strain 1448A / Race 6) (Pseudomonas syringae pv. phaseolicola (strain 1448A / Race 6)).